A 227-amino-acid chain; its full sequence is MIHHIPNVLSKEQVQYFRNEMDKIEWVNGKVTAGTLSATVKRNQQLPEDHPLTHHLSNIILEALGTHPLFLSAAIPLDIIPPLFNRYENQESFGFHVDNSIRRIRGTNERLRTDLSCTLFLSEPEEYEGGDLVVEDTYGYHEVKLPAGDMILYPSTSLHEVTAITSGCRIASFFWVQSMVRDDAERHMLFNLDQTVQNLRMQLGDNHSEVIKLTNLYHNLMRKWAEL.

The Fe2OG dioxygenase domain occupies 78–178 (DIIPPLFNRY…RIASFFWVQS (101 aa)). 3 residues coordinate Fe cation: His96, Asp98, and His159. 2-oxoglutarate is bound at residue Arg169.

Fe(2+) is required as a cofactor. The cofactor is L-ascorbate.

This chain is PKHD-type hydroxylase ACICU_00484, found in Acinetobacter baumannii (strain ACICU).